Here is an 807-residue protein sequence, read N- to C-terminus: AP-5 complex subunit zeta-1 (807 aa).

Probably part of the adaptor protein complex 5 (AP-5) a tetramer composed of AP5B1, AP5M1, AP5S1 and AP5Z1. Interacts with ZFYVE26 and SPG11.

The protein localises to the cytoplasm. It localises to the nucleus. In terms of biological role, as part of AP-5, a probable fifth adaptor protein complex it may be involved in endosomal transport. According to PubMed:20613862 it is a putative helicase required for efficient homologous recombination DNA double-strand break repair. The protein is AP-5 complex subunit zeta-1 (AP5Z1) of Homo sapiens (Human).